A 525-amino-acid chain; its full sequence is MSSIEQVNEVFDTILVLDFGSQYSHLITRRLREFNIYAEMLPCTQKIADLHFKPKGVIMSGGPYSVYAEDAPHVDHAIFDLGVPILGICYGMQELAWINGKQVARGEKREYGPATLNVLDKEDALFKNVDHSTVWMSHGDKLHGLPTGFKVIATSDNSPYCGIVHESKQIYGIQFHPEVTHSSNGKTLLKNFAVDLCHAKQNWTMKNFIGTEVQRIRDLVGPTAEVIGAVSGGVDSTVASKLMTEAIGDRFHAILVDNGVLRLNEAATVKKTLVDGLGINLTVVDAADEFLDNLKGVTDPEKKRKIIGNTFIHVFEREAEKIKPKDGKAIEFLLQGTLYPDVIESISFKGPSQTIKTHHNVGGLLENMKLKLIEPLRELFKDEVRELGELLGISHELVWRHPFPGPGIAIRVLGEVTREQVEIARKADHIYIEEIRKAGLYDKISQAFACLLPVKSVGVMGDQRTYEQVIALRAIETTDFMTADWYPFEHSFLRKVASRIVNEVDGVARVTYDITSKPPATVEWE.

The Glutamine amidotransferase type-1 domain maps to 13–202 (TILVLDFGSQ…AVDLCHAKQN (190 aa)). The active-site Nucleophile is Cys89. Active-site residues include His176 and Glu178. A GMPS ATP-PPase domain is found at 203–400 (WTMKNFIGTE…LGISHELVWR (198 aa)). An ATP-binding site is contributed by 231 to 237 (SGGVDST). Arg304, Asp462, Lys517, and Glu523 together coordinate XMP.

As to quaternary structure, homodimer. Mg(2+) serves as cofactor.

It localises to the cytoplasm. Its subcellular location is the cytosol. The enzyme catalyses XMP + L-glutamine + ATP + H2O = GMP + L-glutamate + AMP + diphosphate + 2 H(+). Its pathway is purine metabolism; GMP biosynthesis; GMP from XMP (L-Gln route): step 1/1. Its function is as follows. Catalyzes the conversion of xanthine monophosphate (XMP) to GMP in the presence of glutamine and ATP through an adenyl-XMP intermediate. This Candida glabrata (strain ATCC 2001 / BCRC 20586 / JCM 3761 / NBRC 0622 / NRRL Y-65 / CBS 138) (Yeast) protein is GMP synthase [glutamine-hydrolyzing] (GUA1).